A 434-amino-acid polypeptide reads, in one-letter code: Methylenetetrahydrofolate--tRNA-(uracil-5-)-methyltransferase TrmFO (434 aa).

Residue 10–15 (GAGLAG) coordinates FAD.

The protein belongs to the MnmG family. TrmFO subfamily. FAD serves as cofactor.

Its subcellular location is the cytoplasm. It carries out the reaction uridine(54) in tRNA + (6R)-5,10-methylene-5,6,7,8-tetrahydrofolate + NADH + H(+) = 5-methyluridine(54) in tRNA + (6S)-5,6,7,8-tetrahydrofolate + NAD(+). The enzyme catalyses uridine(54) in tRNA + (6R)-5,10-methylene-5,6,7,8-tetrahydrofolate + NADPH + H(+) = 5-methyluridine(54) in tRNA + (6S)-5,6,7,8-tetrahydrofolate + NADP(+). Functionally, catalyzes the folate-dependent formation of 5-methyl-uridine at position 54 (M-5-U54) in all tRNAs. In Bacillus cereus (strain ATCC 14579 / DSM 31 / CCUG 7414 / JCM 2152 / NBRC 15305 / NCIMB 9373 / NCTC 2599 / NRRL B-3711), this protein is Methylenetetrahydrofolate--tRNA-(uracil-5-)-methyltransferase TrmFO.